Reading from the N-terminus, the 239-residue chain is MKVTLFVTCLVDMFETNVGKATVEVLERLGCEIEFPEAQVCCGQPAYNSGHVEAAKEAMKHMIETFEDAEYIVTPSGSCATMFHEYPHVFKDDPKWAKRAQKVADKTYEFTQFIVDVLKVTDVGASLPGIATIHKSCHMTRLLGVKEAPGILLSSVKGLIVRELPNVQNCCGFGGTFSVKMTPISEQMVDEKVDSVMETGADYLIGADCGCLLNIGGRIERLGKEVKVMHIAEVLNSRS.

Belongs to the LutA/YkgE family.

Its function is as follows. Is involved in L-lactate degradation and allows cells to grow with lactate as the sole carbon source. The sequence is that of Lactate utilization protein A 2 from Bacillus mycoides (strain KBAB4) (Bacillus weihenstephanensis).